The primary structure comprises 407 residues: Inhibin beta B chain (407 aa).

Residues 1-28 form the signal peptide; that stretch reads MDGLPGRALGAACLLLLAAGWLGPEAWG. The interval 27–60 is disordered; that stretch reads WGSPTPPPSPAAPPPPPPPGALGGSQDTCTSCGG. Residues 29 to 292 constitute a propeptide that is removed on maturation; the sequence is SPTPPPSPAA…VDSRHRIRKR (264 aa). A compositionally biased stretch (pro residues) spans 30-46; it reads PTPPPSPAAPPPPPPPG. The N-linked (GlcNAc...) asparagine glycan is linked to Asn93. Cystine bridges form between Cys296–Cys304, Cys303–Cys372, Cys332–Cys404, and Cys336–Cys406.

The protein belongs to the TGF-beta family. Dimeric, linked by one or more disulfide bonds. Inhibin B is a dimer of alpha and beta-B. Activin B is a homodimer of beta-B. Activin AB is a dimer of beta-A and beta-B. Interacts with FST and FSTL3.

Its subcellular location is the secreted. Functionally, inhibins and activins inhibit and activate, respectively, the secretion of follitropin by the pituitary gland. Inhibins/activins are involved in regulating a number of diverse functions such as hypothalamic and pituitary hormone secretion, gonadal hormone secretion, germ cell development and maturation, erythroid differentiation, insulin secretion, nerve cell survival, embryonic axial development or bone growth, depending on their subunit composition. Inhibins appear to oppose the functions of activins. Activin B is a dimer of alpha and beta-B that plays a role in several essential biological processes including embryonic development, stem cell maintenance and differentiation, haematopoiesis, cell proliferation and wound healing. Signals through type I receptor ACVR1C, abundantly expressed in pancreatic beta cells, and type II receptors like ACVR2A. Upon ligand binding, these receptors phosphorylate intracellular signaling mediators SMAD2 and SMAD3, which form a complex with SMAD4, translocate to the nucleus, and regulate gene expression. Plays a crucial role in the induction of hepcidin by inflammation through activation of ACVR1C and subsequent phosphorylation of SMAD1/5/8. Regulates adipocyte lipid metabolism by decreasing non-esterified fatty acids and glycerol release and increases intracellular triglyceride content. Stimulates wound healing by promoting cell migration and hair follicle regeneration through the JNK and ERK signaling pathways downstream of RHOA. In terms of biological role, inhibin B is a dimer of alpha and beta-B that plays a crucial role in the regulation of the reproductive system by inhibiting the secretion of follicle-stimulating hormone (FSH) from the anterior pituitary gland. Thereby, maintains reproductive homeostasis in both males and females. Acts as a more potent suppressor of FSH release than inhibin A. Functions as competitive receptor antagonist binding activin type II receptors with high affinity in the presence of the TGF-beta type III coreceptor/TGFBR3L. In Sus scrofa (Pig), this protein is Inhibin beta B chain (INHBB).